The chain runs to 355 residues: Guanine nucleotide-binding protein G(i) subunit alpha-2 (355 aa).

Glycine 2 is lipidated: N-myristoyl glycine. Residue cysteine 3 is the site of S-palmitoyl cysteine attachment. The G-alpha domain occupies 32 to 355 (REVKLLLLGA…KNNLKDCGLF (324 aa)). The interval 35–48 (KLLLLGAGESGKST) is G1 motif. GTP-binding positions include 40-47 (GAGESGKS), 176-182 (LRTRVKT), 201-205 (DVGGQ), 270-273 (NKKD), and alanine 327. Residues serine 47 and threonine 182 each contribute to the Mg(2+) site. A G2 motif region spans residues 174–182 (DVLRTRVKT). Positions 197–206 (FKMFDVGGQR) are G3 motif. The tract at residues 266–273 (ILFLNKKD) is G4 motif. Positions 325–330 (TCATDT) are G5 motif.

It belongs to the G-alpha family. G(i/o/t/z) subfamily. G proteins are composed of 3 units; alpha, beta and gamma. The alpha chain contains the guanine nucleotide binding site.

The protein localises to the cytoplasm. The protein resides in the cytoskeleton. It is found in the microtubule organizing center. Its subcellular location is the centrosome. It localises to the cell membrane. Its function is as follows. Guanine nucleotide-binding proteins (G proteins) are involved as modulators or transducers in various transmembrane signaling systems. The G(i) proteins are involved in hormonal regulation of adenylate cyclase: they inhibit the cyclase in response to beta-adrenergic stimuli. May play a role in cell division. The polypeptide is Guanine nucleotide-binding protein G(i) subunit alpha-2 (gnai2) (Oryzias latipes (Japanese rice fish)).